The primary structure comprises 854 residues: Fibronectin-binding protein PlpA (854 aa).

The span at M1–G24 shows a compositional bias: low complexity. The disordered stretch occupies residues M1–A33. The interval Q91–N109 is fibronectin-binding. 4 disordered regions span residues Y247–P327, S411–N434, T743–P766, and I835–R854. The span at E258–E267 shows a compositional bias: basic and acidic residues. 2 stretches are compositionally biased toward polar residues: residues T311–I320 and S411–E428. Residues N384–V622 adopt a coiled-coil conformation. Over residues P746–L764 the composition is skewed to pro residues.

It is found in the cell membrane. Binds immobilized fibronectin, specifically the gelatin/heparin-binding domain. The protein is Fibronectin-binding protein PlpA (plpA) of Mycoplasmoides gallisepticum (strain R(low / passage 15 / clone 2)) (Mycoplasma gallisepticum).